Consider the following 293-residue polypeptide: ATP synthase gamma chain (293 aa).

The protein belongs to the ATPase gamma chain family. F-type ATPases have 2 components, CF(1) - the catalytic core - and CF(0) - the membrane proton channel. CF(1) has five subunits: alpha(3), beta(3), gamma(1), delta(1), epsilon(1). CF(0) has three main subunits: a, b and c.

It is found in the cell membrane. Functionally, produces ATP from ADP in the presence of a proton gradient across the membrane. The gamma chain is believed to be important in regulating ATPase activity and the flow of protons through the CF(0) complex. This chain is ATP synthase gamma chain, found in Streptococcus sanguinis.